Consider the following 105-residue polypeptide: Urease subunit beta (105 aa).

Belongs to the urease beta subunit family. In terms of assembly, heterotrimer of UreA (gamma), UreB (beta) and UreC (alpha) subunits. Three heterotrimers associate to form the active enzyme.

It localises to the cytoplasm. The catalysed reaction is urea + 2 H2O + H(+) = hydrogencarbonate + 2 NH4(+). Its pathway is nitrogen metabolism; urea degradation; CO(2) and NH(3) from urea (urease route): step 1/1. This Pseudomonas putida (strain GB-1) protein is Urease subunit beta.